The sequence spans 691 residues: Inactive TPR repeat-containing thioredoxin TTL3 (691 aa).

Disordered regions lie at residues methionine 1–proline 153 and methionine 174–lysine 209. Position 8 is a phosphoserine (serine 8). Residues arginine 19–aspartate 39 are compositionally biased toward basic and acidic residues. 2 positions are modified to phosphoserine: serine 42 and serine 45. The segment covering glycine 51–serine 79 has biased composition (low complexity). The segment covering lysine 83 to serine 93 has biased composition (basic and acidic residues). 3 stretches are compositionally biased toward polar residues: residues glycine 94–arginine 108, serine 118–proline 140, and alanine 175–threonine 189. TPR repeat units lie at residues proline 220–asparagine 253, alanine 255–tyrosine 287, arginine 289–alanine 321, glutamine 327–serine 362, alanine 412–asparagine 445, valine 458–asparagine 491, serine 492–tyrosine 525, and lysine 527–aspartate 559. The Thioredoxin domain maps to aspartate 596–glutamate 683.

In terms of assembly, interacts with BRL2. Expressed in embryos and organ primordia in shoot and root. In primary and cauline leaves and petals, is expressed in hydathodes, guard cells, petiole cells and cells associated with differentiating vascular bundles.

Involved in osmotic and salt stress tolerance. May play a role in the control of meristematic cell size during osmotic stress. May function as an adapter protein for BRL2 and may be required for signaling affecting leaf vascular tissue pattern formation. This chain is Inactive TPR repeat-containing thioredoxin TTL3, found in Arabidopsis thaliana (Mouse-ear cress).